Reading from the N-terminus, the 421-residue chain is Gamma-glutamyl phosphate reductase (421 aa).

It belongs to the gamma-glutamyl phosphate reductase family.

The protein localises to the cytoplasm. The catalysed reaction is L-glutamate 5-semialdehyde + phosphate + NADP(+) = L-glutamyl 5-phosphate + NADPH + H(+). Its pathway is amino-acid biosynthesis; L-proline biosynthesis; L-glutamate 5-semialdehyde from L-glutamate: step 2/2. Catalyzes the NADPH-dependent reduction of L-glutamate 5-phosphate into L-glutamate 5-semialdehyde and phosphate. The product spontaneously undergoes cyclization to form 1-pyrroline-5-carboxylate. This chain is Gamma-glutamyl phosphate reductase, found in Acinetobacter baumannii (strain ATCC 17978 / DSM 105126 / CIP 53.77 / LMG 1025 / NCDC KC755 / 5377).